The primary structure comprises 265 residues: R-spondin-1 (265 aa).

The signal sequence occupies residues 1 to 20 (MRLGLCVVALVLSWTHIAVG). FU repeat units lie at residues 34–85 (AEGS…GYFD) and 91–135 (MNKC…GSTA). 11 cysteine pairs are disulfide-bonded: cysteine 40-cysteine 47, cysteine 44-cysteine 53, cysteine 56-cysteine 75, cysteine 79-cysteine 94, cysteine 97-cysteine 105, cysteine 102-cysteine 111, cysteine 114-cysteine 125, cysteine 129-cysteine 142, cysteine 148-cysteine 190, cysteine 159-cysteine 166, and cysteine 199-cysteine 206. Asparagine 137 is a glycosylation site (N-linked (GlcNAc...) asparagine). A TSP type-1 domain is found at 147 to 207 (QCEMSEWSPW…KCTVRRTPCP (61 aa)). Tryptophan 153 carries a C-linked (Man) tryptophan glycan. A glycan (C-linked (Man) tryptophan; by DPY19L3) is linked at tryptophan 156. Disordered stretches follow at residues 173-192 (EERT…TCSD) and 201-265 (VRRT…TWAQ). Low complexity predominate over residues 245–257 (QQQPQPGTTGPLT).

It belongs to the R-spondin family. As to quaternary structure, interacts with ZNRF3; promoting indirect interaction between ZNRF3 and LGR4 and membrane clearance of ZNRF3. Identified in a complex composed of RNF43, LGR5 and RSPO1. Interacts with the extracellular domain of FZD8 and LRP6. It however does not form a ternary complex with FZD8 and LRP6. Interacts with WNT1. Binds heparin. Interacts with LGR4, LGR5 and LGR6. Interacts (via FU repeats) with KREM1. C-, and N-glycosylated. N-glycosylation at Asn-137, negatively influences its secretion and enhancing effect on Wnt/beta-catenin signaling. C-mannosylation at Trp-156 by DPY19L3 is required for its secretion an regulates the enhancing activity of Wnt signaling. As to expression, expressed in the dorsal part of the neural tube on 10 and 12 dpc, especially in the boundary region between roof plate and neuroepithelium. This expression is enhanced in the rostral part. Also expressed in other tissues such as truncal region neighboring forelimbs and mesenchymal tissues around the nasal cavity.

It is found in the secreted. It localises to the nucleus. Its function is as follows. Activator of the canonical Wnt signaling pathway by acting as a ligand for LGR4-6 receptors. Upon binding to LGR4-6 (LGR4, LGR5 or LGR6), LGR4-6 associate with phosphorylated LRP6 and frizzled receptors that are activated by extracellular Wnt receptors, triggering the canonical Wnt signaling pathway to increase expression of target genes. Also regulates the canonical Wnt/beta-catenin-dependent pathway and non-canonical Wnt signaling by acting as an inhibitor of ZNRF3, an important regulator of the Wnt signaling pathway. Acts as a ligand for frizzled FZD8 and LRP6. May negatively regulate the TGF-beta pathway. Has a essential roles in ovary determination. Regulates Wnt signaling by antagonizing DKK1/KREM1-mediated internalization of LRP6 through an interaction with KREM1. The sequence is that of R-spondin-1 (Rspo1) from Mus musculus (Mouse).